The chain runs to 1217 residues: ATP-dependent helicase/nuclease subunit A (1217 aa).

The UvrD-like helicase ATP-binding domain occupies 10–475 (VIWTDAQWQS…IDLSQNFRSR (466 aa)). 31-38 (AAAGSGKT) is an ATP binding site. The region spanning 476-786 (KEVLSTTNYI…RMMTIHSSKG (311 aa)) is the UvrD-like helicase C-terminal domain.

This sequence belongs to the helicase family. AddA subfamily. As to quaternary structure, heterodimer of AddA and AddB/RexB. Requires Mg(2+) as cofactor.

It carries out the reaction Couples ATP hydrolysis with the unwinding of duplex DNA by translocating in the 3'-5' direction.. It catalyses the reaction ATP + H2O = ADP + phosphate + H(+). Functionally, the heterodimer acts as both an ATP-dependent DNA helicase and an ATP-dependent, dual-direction single-stranded exonuclease. Recognizes the chi site generating a DNA molecule suitable for the initiation of homologous recombination. The AddA nuclease domain is required for chi fragment generation; this subunit has the helicase and 3' -&gt; 5' nuclease activities. The chain is ATP-dependent helicase/nuclease subunit A from Staphylococcus aureus (strain Mu3 / ATCC 700698).